Reading from the N-terminus, the 191-residue chain is Large ribosomal subunit protein uL5 (191 aa).

It belongs to the universal ribosomal protein uL5 family. In terms of assembly, part of the 50S ribosomal subunit; part of the 5S rRNA/L5/L18/L25 subcomplex. Contacts the 5S rRNA and the P site tRNA. Forms a bridge to the 30S subunit in the 70S ribosome.

Its function is as follows. This is one of the proteins that bind and probably mediate the attachment of the 5S RNA into the large ribosomal subunit, where it forms part of the central protuberance. In the 70S ribosome it contacts protein S13 of the 30S subunit (bridge B1b), connecting the 2 subunits; this bridge is implicated in subunit movement. Contacts the P site tRNA; the 5S rRNA and some of its associated proteins might help stabilize positioning of ribosome-bound tRNAs. The sequence is that of Large ribosomal subunit protein uL5 from Micrococcus luteus (Micrococcus lysodeikticus).